Reading from the N-terminus, the 872-residue chain is DNA mismatch repair protein MutS (872 aa).

Positions 1–17 are enriched in polar residues; it reads MSISKIESVNAEKQSPV. Residues 1-22 are disordered; it reads MSISKIESVNAEKQSPVGTEIG. Position 632-639 (632-639) interacts with ATP; sequence GPNMGGKS.

It belongs to the DNA mismatch repair MutS family.

In terms of biological role, this protein is involved in the repair of mismatches in DNA. It is possible that it carries out the mismatch recognition step. This protein has a weak ATPase activity. In Azoarcus sp. (strain BH72), this protein is DNA mismatch repair protein MutS.